The sequence spans 111 residues: Anti-adapter protein IraM (111 aa).

This sequence belongs to the IraM/RssC family.

It localises to the cytoplasm. In terms of biological role, inhibits RpoS proteolysis by regulating RssB activity, thereby increasing the stability of the sigma stress factor RpoS during magnesium starvation. This chain is Anti-adapter protein IraM, found in Escherichia coli O127:H6 (strain E2348/69 / EPEC).